We begin with the raw amino-acid sequence, 209 residues long: Ribosomal RNA large subunit methyltransferase E (209 aa).

5 residues coordinate S-adenosyl-L-methionine: Gly-63, Trp-65, Asp-83, Asp-99, and Asp-124. Catalysis depends on Lys-164, which acts as the Proton acceptor.

This sequence belongs to the class I-like SAM-binding methyltransferase superfamily. RNA methyltransferase RlmE family.

The protein resides in the cytoplasm. It carries out the reaction uridine(2552) in 23S rRNA + S-adenosyl-L-methionine = 2'-O-methyluridine(2552) in 23S rRNA + S-adenosyl-L-homocysteine + H(+). Specifically methylates the uridine in position 2552 of 23S rRNA at the 2'-O position of the ribose in the fully assembled 50S ribosomal subunit. This Alkalilimnicola ehrlichii (strain ATCC BAA-1101 / DSM 17681 / MLHE-1) protein is Ribosomal RNA large subunit methyltransferase E.